The following is a 120-amino-acid chain: Large ribosomal subunit protein uL18 (120 aa).

The protein belongs to the universal ribosomal protein uL18 family. In terms of assembly, part of the 50S ribosomal subunit; part of the 5S rRNA/L5/L18/L25 subcomplex. Contacts the 5S and 23S rRNAs.

Functionally, this is one of the proteins that bind and probably mediate the attachment of the 5S RNA into the large ribosomal subunit, where it forms part of the central protuberance. In Synechococcus elongatus (strain ATCC 33912 / PCC 7942 / FACHB-805) (Anacystis nidulans R2), this protein is Large ribosomal subunit protein uL18.